A 355-amino-acid chain; its full sequence is Protein DVR-1 (355 aa).

The N-terminal stretch at methionine 1–leucine 15 is a signal peptide. A propeptide spanning residues cysteine 16 to arginine 240 is cleaved from the precursor. N-linked (GlcNAc...) asparagine glycans are attached at residues asparagine 108, asparagine 179, and asparagine 296. Cystine bridges form between cysteine 254–cysteine 320, cysteine 283–cysteine 352, and cysteine 287–cysteine 354.

The protein belongs to the TGF-beta family. As to quaternary structure, homodimer. In terms of tissue distribution, abundant in ovaries and eggs, and equally distributed among all blastomeres.

The protein localises to the secreted. Functionally, serves to facilitate the differentiation of either mesoderm or endoderm either as a cofactor in an instructive signal or by providing permissive environment. This Danio rerio (Zebrafish) protein is Protein DVR-1 (dvr1).